The sequence spans 362 residues: Serine/threonine-protein kinase ZRK4 (362 aa).

The tract at residues 1-23 is disordered; sequence MNDQKMSCWRKKSKKKNSEANQR. The region spanning 35-362 is the Protein kinase domain; it reads LEDLIELCNG…KELKRIERWT (328 aa). Residues 41–49 and lysine 89 each bind ATP; that span reads LCNGKSNPI. The active-site Proton acceptor is aspartate 185.

The protein belongs to the protein kinase superfamily. Ser/Thr protein kinase family. ZRK subfamily.

The catalysed reaction is L-seryl-[protein] + ATP = O-phospho-L-seryl-[protein] + ADP + H(+). The enzyme catalyses L-threonyl-[protein] + ATP = O-phospho-L-threonyl-[protein] + ADP + H(+). This is Serine/threonine-protein kinase ZRK4 from Arabidopsis thaliana (Mouse-ear cress).